Here is a 546-residue protein sequence, read N- to C-terminus: Membrane protein insertase YidC (546 aa).

The helical transmembrane segment at 6–26 threads the bilayer; that stretch reads NLLLIALLFVSFMIWQAWQVD. Residues 30-44 are compositionally biased toward low complexity; sequence QPTAQTTQQTTNTAT. The interval 30-55 is disordered; the sequence is QPTAQTTQQTTNTATGDKASQAVPGS. 4 helical membrane-spanning segments follow: residues 344–364, 419–439, 457–477, and 498–518; these read KFIHSFVGNWGFSIIVITFIV, LGGCLPLIIQMPIFLALYYML, LSAQDPYYILPILMGITMYFI, and PVIFTVFFLWFPAGLVLYYIV.

It belongs to the OXA1/ALB3/YidC family. Type 1 subfamily. As to quaternary structure, interacts with the Sec translocase complex via SecD. Specifically interacts with transmembrane segments of nascent integral membrane proteins during membrane integration.

The protein localises to the cell inner membrane. Functionally, required for the insertion and/or proper folding and/or complex formation of integral membrane proteins into the membrane. Involved in integration of membrane proteins that insert both dependently and independently of the Sec translocase complex, as well as at least some lipoproteins. Aids folding of multispanning membrane proteins. This chain is Membrane protein insertase YidC, found in Yersinia pestis.